A 150-amino-acid polypeptide reads, in one-letter code: Ribosome-binding factor A (150 aa).

A disordered region spans residues 126 to 150 (EVARDLSHDDDEDGGADEAPRNGDE).

Belongs to the RbfA family. As to quaternary structure, monomer. Binds 30S ribosomal subunits, but not 50S ribosomal subunits or 70S ribosomes.

It is found in the cytoplasm. Its function is as follows. One of several proteins that assist in the late maturation steps of the functional core of the 30S ribosomal subunit. Associates with free 30S ribosomal subunits (but not with 30S subunits that are part of 70S ribosomes or polysomes). Required for efficient processing of 16S rRNA. May interact with the 5'-terminal helix region of 16S rRNA. This is Ribosome-binding factor A from Brucella suis (strain ATCC 23445 / NCTC 10510).